Here is a 495-residue protein sequence, read N- to C-terminus: Major facilitator-type transporter hxnP (495 aa).

Positions 1-24 are disordered; that stretch reads MGATATDIEKVPSAGTPDEPKAGE. Transmembrane regions (helical) follow at residues 36 to 55, 84 to 104, 123 to 143, 145 to 165, and 177 to 197; these read SFVR…MYFF, LLIL…NLLI, VWGI…LLAI, IILG…FTLF, and VLQS…FGLF. The N-linked (GlcNAc...) asparagine glycan is linked to Asn200. The next 5 membrane-spanning stretches (helical) occupy residues 209–229, 282–302, 314–334, 341–361, and 368–388; these read WLFI…FWWL, VITF…PIIV, LWTV…AKSS, SLHI…LASI, and GVSY…TCLV. The N-linked (GlcNAc...) asparagine glycan is linked to Asn395. The next 2 membrane-spanning stretches (helical) occupy residues 404 to 424 and 436 to 456; these read ANTG…AATF and LVAT…MGTW.

This sequence belongs to the major facilitator superfamily.

The protein resides in the cell membrane. In terms of biological role, major facilitator-type transporter, part of the hnx cluster involved in the purine degradation. The nicotinate hydroxylase hnxS accepts nicotinate as a substrate and catalyzes the first step of nicotinate catabolism. The major facilitator-type transporters hxnP and hxnZ are probably involved in the uptake of nicotinate-derived metabolites, and the oxidoreductases hxnT and hxnY in the further metabolism of 6-OH nicotinic acid. The chain is Major facilitator-type transporter hxnP from Emericella nidulans (strain FGSC A4 / ATCC 38163 / CBS 112.46 / NRRL 194 / M139) (Aspergillus nidulans).